A 193-amino-acid chain; its full sequence is dCTP deaminase (193 aa).

DCTP-binding positions include 110–115 (RSSLAR), Asp-128, 136–138 (VLE), Tyr-171, Lys-178, and Gln-182. Glu-138 acts as the Proton donor/acceptor in catalysis. The disordered stretch occupies residues 169 to 193 (RPYNSRQDAKYKGQQGAVASRIDKD).

The protein belongs to the dCTP deaminase family. Homotrimer.

The enzyme catalyses dCTP + H2O + H(+) = dUTP + NH4(+). It functions in the pathway pyrimidine metabolism; dUMP biosynthesis; dUMP from dCTP (dUTP route): step 1/2. Catalyzes the deamination of dCTP to dUTP. The chain is dCTP deaminase from Erwinia tasmaniensis (strain DSM 17950 / CFBP 7177 / CIP 109463 / NCPPB 4357 / Et1/99).